The sequence spans 192 residues: Virion infectivity factor (192 aa).

Positions 14-17 (DRMR) are interaction with host APOBEC3F; F1-box. Residues 40 to 44 (YRHHF) are interaction with host APOBEC3G; G-box. The segment at 54–72 (EVHIPLETAELVITTYWGL) is interaction with host APOBEC3F and APOBEC3G; FG-box. Residues 74-79 (PGEREW) form an interaction with host APOBEC3F; F2-box region. Residues 75–114 (GEREWHLGQGVSIEWRQGRYRTQIDPGLADQLIHIYYFDC) are RNA-binding. Residue Thr-96 is modified to Phosphothreonine; by host MAP4K1. 4 residues coordinate Zn(2+): His-108, Cys-114, Cys-133, and His-139. Positions 108-139 (HIYYFDCFSESAIRKAILGHKISPRCNYQAGH) match the HCCH motif motif. Ser-144 bears the Phosphoserine; by host mark. A BC-box-like motif motif is present at residues 144 to 153 (SLQYLALTAL). The multimerization stretch occupies residues 151–164 (TALIAPKKTKPPLP). Residues 151-180 (TALIAPKKTKPPLPSVQKLVEDRWNKPQKT) form an SOCS box-like region. The tract at residues 164-192 (PSVQKLVEDRWNKPQKTRGHRESHTMNGH) is disordered. The residue at position 165 (Ser-165) is a Phosphoserine; by host MAP4K1. The tract at residues 171 to 172 (ED) is membrane association. Residues 183-192 (HRESHTMNGH) are compositionally biased toward basic and acidic residues. The residue at position 188 (Thr-188) is a Phosphothreonine; by host.

This sequence belongs to the primate lentivirus group Vif protein family. As to quaternary structure, homomultimer; in vitro and presumably in vivo. Interacts with viral RNA and Pr55Gag precursor; these interactions mediate Vif incorporation into the virion. Interacts with the viral reverse transcriptase. Forms cullin-5-RING E3 ubiquitin-protein ligase complex (ECS complex) by interacting with host CUL5, RBX2, elongin BC complex (ELOB and ELOC) and CBFB/CBF-beta. Within the ECS complex, Vif interacts directly with host CUL5, ELOC and APOBEC (APOBEC3F and APOBEC3G) substrates. The ECS complex also contains some single-stranded RNA (ssRNA) that acts as a glue that bridges Vif with APOBEC (APOBEC3F and APOBEC3G) substrates. Interacts with host UBCE7IP1 isoform 3/ZIN and possibly with SAT. Interacts with host tyrosine kinases HCK and FYN; these interactions may decrease level of phosphorylated APOBEC3G incorporation into virions. Interacts with host ABCE1; this interaction may play a role in protecting viral RNA from damage during viral assembly. Interacts with host MDM2; this interaction targets Vif for degradation by the proteasome. Processed in virion by the viral protease. In terms of processing, highly phosphorylated on serine and threonine residues. Post-translationally, polyubiquitinated and degraded by the proteasome in the presence of APOBEC3G.

The protein resides in the host cytoplasm. It is found in the host cell membrane. It localises to the virion. In terms of biological role, counteracts the innate antiviral activity of host APOBEC3F and APOBEC3G by promoting their ubiquitination and degradation. Acts as a substrate recognition component of an E3 ubiquitin-protein ligase complex: mechanistically, Vif hijacks a host cullin-5-RING E3 ubiquitin-protein ligase complex (ECS complex) and the transcription coactivator CBFB/CBF-beta to form an active E3 ubiquitin-protein ligase complex that targets APOBEC3G and APOBEC3F for polyubiquitination, leading to their degradation by the proteasome. Vif interaction with APOBEC3G also blocks its cytidine deaminase activity in a proteasome-independent manner, suggesting a dual inhibitory mechanism. May interact directly with APOBEC3G mRNA in order to inhibit its translation. Association with CBFB/CBF-beta also inhibits the transcription coactivator activity of CBFB/CBF-beta. Seems to play a role in viral morphology by affecting the stability of the viral nucleoprotein core. Finally, Vif also contributes to the G2 cell cycle arrest observed in HIV infected cells. The polypeptide is Virion infectivity factor (Homo sapiens (Human)).